The sequence spans 91 residues: uncharacterized protein (91 aa).

Positions 1 to 91 (MLTFWHWKWL…YQNILRENGI (91 aa)) constitute an Integrase catalytic domain.

This is an uncharacterized protein from Haemophilus influenzae (strain ATCC 51907 / DSM 11121 / KW20 / Rd).